A 285-amino-acid polypeptide reads, in one-letter code: Nucleotide-binding protein Pnap_0906 (285 aa).

Position 8 to 15 (8 to 15 (GMSGSGKS)) interacts with ATP. Residue 57 to 60 (DVRS) participates in GTP binding.

It belongs to the RapZ-like family.

Functionally, displays ATPase and GTPase activities. The protein is Nucleotide-binding protein Pnap_0906 of Polaromonas naphthalenivorans (strain CJ2).